Here is a 162-residue protein sequence, read N- to C-terminus: Transcription elongation factor GreB (162 aa).

A coiled-coil region spans residues 52–73; it reads KKLLREIDRRVRYLRKRLEDVK.

Belongs to the GreA/GreB family. GreB subfamily.

Functionally, necessary for efficient RNA polymerase transcription elongation past template-encoded arresting sites. The arresting sites in DNA have the property of trapping a certain fraction of elongating RNA polymerases that pass through, resulting in locked ternary complexes. Cleavage of the nascent transcript by cleavage factors such as GreA or GreB allows the resumption of elongation from the new 3'terminus. GreB releases sequences of up to 9 nucleotides in length. This is Transcription elongation factor GreB from Pseudomonas putida (strain ATCC 47054 / DSM 6125 / CFBP 8728 / NCIMB 11950 / KT2440).